A 580-amino-acid polypeptide reads, in one-letter code: Alpha-glucosidase (580 aa).

A signal peptide spans 1-19 (MRPLGALSLFALLATTVSG). N-linked (GlcNAc...) asparagine glycans are attached at residues asparagine 102 and asparagine 127. Aspartate 224 functions as the Nucleophile in the catalytic mechanism. Catalysis depends on glutamate 290, which acts as the Proton donor. Residue asparagine 501 is glycosylated (N-linked (GlcNAc...) asparagine). Residues 560–580 (AAAINLSIGLLLAIMARYIFV) traverse the membrane as a helical segment.

This sequence belongs to the glycosyl hydrolase 13 family. In terms of assembly, (Microbial infection) Binds to L.sphaericus BinB subunit of the binary toxin BinAB. In terms of tissue distribution, in 4th-instar larvae produced in the brush border membranes of the gastric caeca and the posterior stomach cells (at protein level).

Its subcellular location is the membrane. It catalyses the reaction Hydrolysis of terminal, non-reducing (1-&gt;4)-linked alpha-D-glucose residues with release of alpha-D-glucose.. Functionally, probably an alpha-glucosidase, it has no alpha-amylase function. Its function is as follows. (Microbial infection) Serves as the larval receptor for Lysinibacillus sphaericus BinB toxin. In Culex pipiens (House mosquito), this protein is Alpha-glucosidase.